Consider the following 132-residue polypeptide: Small ribosomal subunit protein uS8 (132 aa).

This sequence belongs to the universal ribosomal protein uS8 family. As to quaternary structure, part of the 30S ribosomal subunit. Contacts proteins S5 and S12.

In terms of biological role, one of the primary rRNA binding proteins, it binds directly to 16S rRNA central domain where it helps coordinate assembly of the platform of the 30S subunit. The protein is Small ribosomal subunit protein uS8 of Rhodococcus erythropolis (strain PR4 / NBRC 100887).